Reading from the N-terminus, the 620-residue chain is MSSGVQGGPAAHANAYQTHPLRDAASALGTLSPQAYVDVVSAAQRNFLERMSQLASEQCDAQPAAHDARLDDKPALRAPQERDAPPLGASDTGSRASGAAKLTELLGVLMSVISASSLDELKQRSDIWNQMSKAAQDNLSRLSDAFQRATDEAKAAADAAEQAAAAAKQAGADAKAADAAVDAAQKQYDDAVKQGLPDDRLQSLKAALEQARQQAGDAHGRADALQADATKKLDAASALATQARACEQQVDDAVNQATQQYGASASLRTPQSPRLSGAAELTAVLGKLQELISSGNVKELESKQKLFTEMQAKREAELQKKSDEYQAQVKKAEEMQKTMGCIGKIVGWVITAVSFAAAAFTGGASLALAAVGLALAVGDEISRATTGVSFMDKLMQPVMDAILKPLMEMISSLITKALVACGVDQQKAELAGAILGAVVTGVALVAAAFVGASAVKAVASKVIDAMAGQLTKLMDSAIGKMLVQLIEKFSEKSGLQALGSRTATAMTRMRRAIGVEAKEDGMLLANRFEKAGTVMNVGNQVSQAAGGIVVGVERAKAMGLLADVKEAMYDIKLLGDLLKQAVDAFAEHNRVLAQLMQQMSDAGEMQTSTGKLILRNARAV.

The interval 58 to 95 is disordered; it reads QCDAQPAAHDARLDDKPALRAPQERDAPPLGASDTGSR. A compositionally biased stretch (basic and acidic residues) spans 66-84; the sequence is HDARLDDKPALRAPQERDA. Residues 309 to 339 adopt a coiled-coil conformation; it reads EMQAKREAELQKKSDEYQAQVKKAEEMQKTM. 3 helical membrane-spanning segments follow: residues 355–375, 401–421, and 430–450; these read FAAA…GLAL, AILK…LVAC, and LAGA…AAFV.

This sequence belongs to the SctE/SipB/YopB family.

Its subcellular location is the secreted. The protein resides in the host membrane. Plays a role in the bacterium-induced formation of multinucleated giant cell (MNGC), which is formed after host cell fusion, as well as in the intercellular spreading of bacteria and in the induction of apoptosis in macrophages. May act in concert with other effector proteins to induce fusion of host cell membranes. This chain is Translocator protein BipB (bipB), found in Burkholderia pseudomallei (strain 1710b).